The following is a 125-amino-acid chain: Large ribosomal subunit protein bL12 (125 aa).

It belongs to the bacterial ribosomal protein bL12 family. Homodimer. Part of the ribosomal stalk of the 50S ribosomal subunit. Forms a multimeric L10(L12)X complex, where L10 forms an elongated spine to which 2 to 4 L12 dimers bind in a sequential fashion. Binds GTP-bound translation factors.

Forms part of the ribosomal stalk which helps the ribosome interact with GTP-bound translation factors. Is thus essential for accurate translation. The chain is Large ribosomal subunit protein bL12 from Thermoanaerobacter sp. (strain X514).